The primary structure comprises 315 residues: Transaldolase (315 aa).

Lys131 serves as the catalytic Schiff-base intermediate with substrate.

The protein belongs to the transaldolase family. Type 1 subfamily. As to quaternary structure, homodimer.

It localises to the cytoplasm. It carries out the reaction D-sedoheptulose 7-phosphate + D-glyceraldehyde 3-phosphate = D-erythrose 4-phosphate + beta-D-fructose 6-phosphate. It functions in the pathway carbohydrate degradation; pentose phosphate pathway; D-glyceraldehyde 3-phosphate and beta-D-fructose 6-phosphate from D-ribose 5-phosphate and D-xylulose 5-phosphate (non-oxidative stage): step 2/3. In terms of biological role, transaldolase is important for the balance of metabolites in the pentose-phosphate pathway. The polypeptide is Transaldolase (Actinobacillus pleuropneumoniae serotype 7 (strain AP76)).